The primary structure comprises 877 residues: Alanine--tRNA ligase (877 aa).

Zn(2+) contacts are provided by H567, H571, C669, and H673.

Belongs to the class-II aminoacyl-tRNA synthetase family. Zn(2+) serves as cofactor.

Its subcellular location is the cytoplasm. The catalysed reaction is tRNA(Ala) + L-alanine + ATP = L-alanyl-tRNA(Ala) + AMP + diphosphate. Catalyzes the attachment of alanine to tRNA(Ala) in a two-step reaction: alanine is first activated by ATP to form Ala-AMP and then transferred to the acceptor end of tRNA(Ala). Also edits incorrectly charged Ser-tRNA(Ala) and Gly-tRNA(Ala) via its editing domain. This chain is Alanine--tRNA ligase, found in Rickettsia prowazekii (strain Madrid E).